A 569-amino-acid chain; its full sequence is Ribonuclease J (569 aa).

Histidine 81, histidine 83, aspartate 85, histidine 86, histidine 150, and aspartate 172 together coordinate Zn(2+). Residue 373–377 (HASGH) coordinates substrate. Histidine 399 provides a ligand contact to Zn(2+).

Belongs to the metallo-beta-lactamase superfamily. RNA-metabolizing metallo-beta-lactamase-like family. Bacterial RNase J subfamily. Homodimer, may be a subunit of the RNA degradosome. The cofactor is Zn(2+).

It localises to the cytoplasm. Its function is as follows. An RNase that has 5'-3' exonuclease and possibly endoonuclease activity. Involved in maturation of rRNA and in some organisms also mRNA maturation and/or decay. In Mycoplasma pneumoniae (strain ATCC 29342 / M129 / Subtype 1) (Mycoplasmoides pneumoniae), this protein is Ribonuclease J.